The chain runs to 267 residues: LexA repressor (267 aa).

Residues 1 to 44 (MSIDESSDNPTPRPKLGRPPKSEADKRAEKEAQKDGKKPALSTR) are disordered. The span at 20-38 (PKSEADKRAEKEAQKDGKK) shows a compositional bias: basic and acidic residues. A DNA-binding region (H-T-H motif) is located at residues 65 to 85 (IREIADAVGLHSTSSVSYHLT). Residues 111 to 140 (GQLTNESTKKNAGSPQPTSAAIPEPTTEGE) form a disordered region. Residues 112–129 (QLTNESTKKNAGSPQPTS) show a composition bias toward polar residues. Residues serine 191 and lysine 228 each act as for autocatalytic cleavage activity in the active site.

The protein belongs to the peptidase S24 family. As to quaternary structure, homodimer.

The enzyme catalyses Hydrolysis of Ala-|-Gly bond in repressor LexA.. Functionally, represses a number of genes involved in the response to DNA damage (SOS response), including recA and lexA. In the presence of single-stranded DNA, RecA interacts with LexA causing an autocatalytic cleavage which disrupts the DNA-binding part of LexA, leading to derepression of the SOS regulon and eventually DNA repair. The chain is LexA repressor from Corynebacterium jeikeium (strain K411).